Reading from the N-terminus, the 502-residue chain is Probable glycine dehydrogenase (decarboxylating) subunit 2 (502 aa).

An N6-(pyridoxal phosphate)lysine modification is found at lysine 273.

The protein belongs to the GcvP family. C-terminal subunit subfamily. The glycine cleavage system is composed of four proteins: P, T, L and H. In this organism, the P 'protein' is a heterodimer of two subunits. Pyridoxal 5'-phosphate serves as cofactor.

It catalyses the reaction N(6)-[(R)-lipoyl]-L-lysyl-[glycine-cleavage complex H protein] + glycine + H(+) = N(6)-[(R)-S(8)-aminomethyldihydrolipoyl]-L-lysyl-[glycine-cleavage complex H protein] + CO2. Its function is as follows. The glycine cleavage system catalyzes the degradation of glycine. The P protein binds the alpha-amino group of glycine through its pyridoxal phosphate cofactor; CO(2) is released and the remaining methylamine moiety is then transferred to the lipoamide cofactor of the H protein. The sequence is that of Probable glycine dehydrogenase (decarboxylating) subunit 2 from Thermococcus onnurineus (strain NA1).